The following is a 443-amino-acid chain: Proline--tRNA ligase (443 aa).

It belongs to the class-II aminoacyl-tRNA synthetase family. ProS type 2 subfamily. In terms of assembly, homodimer.

Its subcellular location is the cytoplasm. The enzyme catalyses tRNA(Pro) + L-proline + ATP = L-prolyl-tRNA(Pro) + AMP + diphosphate. Its function is as follows. Catalyzes the attachment of proline to tRNA(Pro) in a two-step reaction: proline is first activated by ATP to form Pro-AMP and then transferred to the acceptor end of tRNA(Pro). This Zymomonas mobilis subsp. mobilis (strain ATCC 10988 / DSM 424 / LMG 404 / NCIMB 8938 / NRRL B-806 / ZM1) protein is Proline--tRNA ligase.